The following is a 469-amino-acid chain: Equisetin cluster transcription factor eqxR (469 aa).

The zn(2)-C6 fungal-type DNA-binding region spans 13-47; the sequence is CDRCRSHKLKCTVAPENSRSGSNRCTRCIRAQVTC. The interval 58 to 84 is disordered; it reads STNVKKADIKSGTNSQETTSMQASTIV. Polar residues predominate over residues 68 to 82; that stretch reads SGTNSQETTSMQAST.

Its subcellular location is the nucleus. Functionally, transcription factor that regulates the expression of the gene cluster that mediates the biosynthesis of Equisetin. This is Equisetin cluster transcription factor eqxR from Fusarium heterosporum.